Consider the following 151-residue polypeptide: Small ribosomal subunit protein uS15 (151 aa).

This sequence belongs to the universal ribosomal protein uS15 family. Component of the small ribosomal subunit.

It is found in the cytoplasm. Its function is as follows. Component of the small ribosomal subunit. The ribosome is a large ribonucleoprotein complex responsible for the synthesis of proteins in the cell. The sequence is that of Small ribosomal subunit protein uS15 (rps13) from Gillichthys mirabilis (Long-jawed mudsucker).